The following is a 206-amino-acid chain: 2,3-bisphosphoglycerate-dependent phosphoglycerate mutase (206 aa).

Substrate-binding positions include 9-16, 22-23, R61, 88-91, K99, 115-116, and 159-160; these read RHGQSEWN, TG, ERDY, RR, and GN. Residue H10 is the Tele-phosphohistidine intermediate of the active site. The active-site Proton donor/acceptor is E88.

This sequence belongs to the phosphoglycerate mutase family. BPG-dependent PGAM subfamily. As to quaternary structure, homodimer.

The catalysed reaction is (2R)-2-phosphoglycerate = (2R)-3-phosphoglycerate. The protein operates within carbohydrate degradation; glycolysis; pyruvate from D-glyceraldehyde 3-phosphate: step 3/5. In terms of biological role, catalyzes the interconversion of 2-phosphoglycerate and 3-phosphoglycerate. This chain is 2,3-bisphosphoglycerate-dependent phosphoglycerate mutase, found in Brucella ovis (strain ATCC 25840 / 63/290 / NCTC 10512).